Consider the following 348-residue polypeptide: N-formyl peptide receptor 2 (348 aa).

Asparagine 1 is a glycosylation site (N-linked (GlcNAc...) asparagine). At 1-24 (NFSTPLNEHEEVSYESAGYTVLRI) the chain is on the extracellular side. Residues 25-47 (LPLVVLGVTFVLGVLGNGLVIWV) form a helical membrane-spanning segment. Over 48–58 (AGFRMTRTVTT) the chain is Cytoplasmic. The helical transmembrane segment at 59-80 (ICYLNLALADFSFTATLPFLIV) threads the bilayer. Over 81 to 97 (SMAMGEKWPFGWFLCKL) the chain is Extracellular. Cysteine 95 and cysteine 173 are joined by a disulfide. A helical transmembrane segment spans residues 98–118 (IHIVVDINLFGSVFLIGFIAL). The Cytoplasmic portion of the chain corresponds to 119 to 137 (DRCICVLHPVWAQNHRTVS). A helical membrane pass occupies residues 138–159 (LAMKVIVGPWILALVLTLPVFL). Residues 160–202 (FLTTVTIPNGDTYCTFNFASWGGTPEERQKVAITMLTARGIIR) lie on the Extracellular side of the membrane. Residues 203-223 (FVIGFSLPMSIVAICYGLIAA) traverse the membrane as a helical segment. The Cytoplasmic portion of the chain corresponds to 224–239 (KIHKKGMIKSSRPLRV). Residues 240 to 263 (LTAVVASFFICWFPFQLVALLGTV) traverse the membrane as a helical segment. Over 264–283 (WLKEMLFYGKYKIIDILVNP) the chain is Extracellular. A helical transmembrane segment spans residues 284–303 (TSSLAFFNSCLNPMLYVFVG). Over 304 to 348 (QDFRERLIHSLPTSLERALSEDSAPTNDTAASCASPPAETELQAM) the chain is Cytoplasmic. Residues 323 to 348 (SEDSAPTNDTAASCASPPAETELQAM) are disordered. Polar residues predominate over residues 326 to 335 (SAPTNDTAAS).

The protein belongs to the G-protein coupled receptor 1 family. As to quaternary structure, interacts with APP; the interaction takes place at the cell surface and the complex is then rapidly internalized.

The protein resides in the cell membrane. Its function is as follows. Low affinity receptor for N-formyl-methionyl peptides, which are powerful neutrophil chemotactic factors. Binding of FMLP to the receptor causes activation of neutrophils. This response is mediated via a G-protein that activates a phosphatidylinositol-calcium second messenger system. Receptor for the chemokine-like protein FAM19A5, mediating FAM19A5-stimulated macrophage chemotaxis and the inhibitory effect on TNFSF11/RANKL-induced osteoclast differentiation. In Gorilla gorilla gorilla (Western lowland gorilla), this protein is N-formyl peptide receptor 2 (FPR2).